The sequence spans 156 residues: Ribosomal RNA large subunit methyltransferase H (156 aa).

Residues Leu-72, Gly-104, and 123 to 128 (LGPMTF) contribute to the S-adenosyl-L-methionine site.

The protein belongs to the RNA methyltransferase RlmH family. As to quaternary structure, homodimer.

The protein localises to the cytoplasm. It carries out the reaction pseudouridine(1915) in 23S rRNA + S-adenosyl-L-methionine = N(3)-methylpseudouridine(1915) in 23S rRNA + S-adenosyl-L-homocysteine + H(+). Functionally, specifically methylates the pseudouridine at position 1915 (m3Psi1915) in 23S rRNA. This chain is Ribosomal RNA large subunit methyltransferase H, found in Nitratidesulfovibrio vulgaris (strain ATCC 29579 / DSM 644 / CCUG 34227 / NCIMB 8303 / VKM B-1760 / Hildenborough) (Desulfovibrio vulgaris).